The chain runs to 213 residues: Pyridoxine/pyridoxamine 5'-phosphate oxidase (213 aa).

Substrate is bound by residues 8-11 (RKNY) and lysine 66. FMN is bound by residues 61–66 (RIVLIK), 76–77 (FT), arginine 82, lysine 83, and glutamine 105. Residues tyrosine 123, arginine 127, and serine 131 each coordinate substrate. FMN contacts are provided by residues 140–141 (QS) and tryptophan 184. 190–192 (RLH) serves as a coordination point for substrate. Residue arginine 194 coordinates FMN.

The protein belongs to the pyridoxamine 5'-phosphate oxidase family. In terms of assembly, homodimer. It depends on FMN as a cofactor.

It catalyses the reaction pyridoxamine 5'-phosphate + O2 + H2O = pyridoxal 5'-phosphate + H2O2 + NH4(+). The catalysed reaction is pyridoxine 5'-phosphate + O2 = pyridoxal 5'-phosphate + H2O2. It functions in the pathway cofactor metabolism; pyridoxal 5'-phosphate salvage; pyridoxal 5'-phosphate from pyridoxamine 5'-phosphate: step 1/1. It participates in cofactor metabolism; pyridoxal 5'-phosphate salvage; pyridoxal 5'-phosphate from pyridoxine 5'-phosphate: step 1/1. In terms of biological role, catalyzes the oxidation of either pyridoxine 5'-phosphate (PNP) or pyridoxamine 5'-phosphate (PMP) into pyridoxal 5'-phosphate (PLP). This chain is Pyridoxine/pyridoxamine 5'-phosphate oxidase, found in Paraburkholderia phytofirmans (strain DSM 17436 / LMG 22146 / PsJN) (Burkholderia phytofirmans).